A 152-amino-acid polypeptide reads, in one-letter code: SsrA-binding protein (152 aa).

Belongs to the SmpB family.

Its subcellular location is the cytoplasm. In terms of biological role, required for rescue of stalled ribosomes mediated by trans-translation. Binds to transfer-messenger RNA (tmRNA), required for stable association of tmRNA with ribosomes. tmRNA and SmpB together mimic tRNA shape, replacing the anticodon stem-loop with SmpB. tmRNA is encoded by the ssrA gene; the 2 termini fold to resemble tRNA(Ala) and it encodes a 'tag peptide', a short internal open reading frame. During trans-translation Ala-aminoacylated tmRNA acts like a tRNA, entering the A-site of stalled ribosomes, displacing the stalled mRNA. The ribosome then switches to translate the ORF on the tmRNA; the nascent peptide is terminated with the 'tag peptide' encoded by the tmRNA and targeted for degradation. The ribosome is freed to recommence translation, which seems to be the essential function of trans-translation. In Rickettsia bellii (strain RML369-C), this protein is SsrA-binding protein.